The sequence spans 351 residues: E3 ubiquitin-protein ligase TRIM63 (351 aa).

The RING-type zinc finger occupies Cys23–Arg79. The interaction with TTN stretch occupies residues Arg74–Ala218. The B box-type zinc finger occupies Gly117 to Leu159. Residues Cys122, His125, Cys145, and His151 each contribute to the Zn(2+) site. Positions Ser189–Glu269 form a coiled coil. The 59-residue stretch at Leu267–Gly325 folds into the COS domain. Positions Thr326–Val345 are enriched in acidic residues. Residues Thr326–Gln351 form a disordered region.

As to quaternary structure, homodimer. Homooligomer and heterooligomer. Interacts with SUMO2, titin/TTN and GMEB1. Interacts with TRIM54 and probably with TRIM55 and TNNI3. Forms a ternary complex with RACK1 and PRKCE. Interacts with CKM. As to expression, muscle specific. Selectively expressed in heart and skeletal muscle.

Its subcellular location is the cytoplasm. It localises to the nucleus. It is found in the myofibril. The protein localises to the sarcomere. The protein resides in the m line. Its subcellular location is the z line. The catalysed reaction is S-ubiquitinyl-[E2 ubiquitin-conjugating enzyme]-L-cysteine + [acceptor protein]-L-lysine = [E2 ubiquitin-conjugating enzyme]-L-cysteine + N(6)-ubiquitinyl-[acceptor protein]-L-lysine.. Its pathway is protein modification; protein ubiquitination. In terms of biological role, E3 ubiquitin ligase. Mediates the ubiquitination and subsequent proteasomal degradation of CKM, GMEB1 and HIBADH. Regulates the proteasomal degradation of muscle proteins under amino acid starvation, where muscle protein is catabolized to provide other organs with amino acids. Inhibits de novo skeletal muscle protein synthesis under amino acid starvation. Regulates proteasomal degradation of cardiac troponin I/TNNI3 and probably of other sarcomeric-associated proteins. May play a role in striated muscle atrophy and hypertrophy by regulating an anti-hypertrophic PKC-mediated signaling pathway. May regulate the organization of myofibrils through TTN in muscle cells. This is E3 ubiquitin-protein ligase TRIM63 (Trim63) from Rattus norvegicus (Rat).